The primary structure comprises 111 residues: Nucleoid-associated protein Teth39_2199 (111 aa).

The protein belongs to the YbaB/EbfC family. Homodimer.

It localises to the cytoplasm. The protein resides in the nucleoid. Binds to DNA and alters its conformation. May be involved in regulation of gene expression, nucleoid organization and DNA protection. This chain is Nucleoid-associated protein Teth39_2199, found in Thermoanaerobacter pseudethanolicus (strain ATCC 33223 / 39E) (Clostridium thermohydrosulfuricum).